The sequence spans 955 residues: Sex determination protein fruitless (955 aa).

Disordered regions lie at residues 1–55 and 70–89; these read MMAT…HAHS and IETD…LPLP. Residues 35–55 show a composition bias toward basic residues; that stretch reads PHGHGHLHSHAHAHGHGHAHS. Residues 76–89 are compositionally biased toward pro residues; sequence APPPPLPPPPLPLP. Residues 131–196 enclose the BTB domain; the sequence is CDVTLACEGE…MYKGEVNVGQ (66 aa). Disordered regions lie at residues 229 to 288, 352 to 526, and 784 to 814; these read LRDS…SMSE, NRSA…LGGG, and ANHQ…SGAG. Over residues 233–246 the composition is skewed to polar residues; the sequence is AASSPTGRGPSNYT. Basic and acidic residues-rich tracts occupy residues 258–279 and 360–379; these read AMRE…DELT and CSDR…RDDL. Low complexity predominate over residues 387–420; sequence KDNNNSNSSSTGGNNNNNNNNNNNSSSNNNNSSS. Over residues 421–446 the composition is skewed to basic and acidic residues; it reads NRERNNSGERERERERERERDRDREL. Low complexity-rich tracts occupy residues 464–475 and 790–814; these read SSSNCDNSLSSS and QHPP…SGAG. The C2H2-type zinc-finger motif lies at 918 to 941; that stretch reads HECPVCGQKFTRRDNMKAHCKIKH.

As to expression, expressed in parts of the adult male brain associated with the courtship song and steps of the male courtship. Also expressed in the larval and pupal male mushroom body and optic lobe. Expressed in pupal female optic lobe.

The protein localises to the nucleus. Its function is as follows. Probably acts as a transcriptional regulator. Part of the somatic sex determination hierarchy; sex determination genes transformer (tra) and transformer-2 (tra-2) switch fru splicing from the male-specific pattern to the female-specific pattern through activation of the female-specific fru 5'-splice site. Vital for the development of males and females. Controls the development of the male specific abdominal muscle of Lawrence. Plays a role in male courtship behavior and sexual orientation. Enhances male-specific expression of takeout in brain-associated fat body. This chain is Sex determination protein fruitless (fru), found in Drosophila melanogaster (Fruit fly).